Consider the following 314-residue polypeptide: Ribosomal RNA small subunit methyltransferase H (314 aa).

Residues 34-36 (GGH), D53, F82, D103, and Q110 contribute to the S-adenosyl-L-methionine site.

It belongs to the methyltransferase superfamily. RsmH family.

It is found in the cytoplasm. The enzyme catalyses cytidine(1402) in 16S rRNA + S-adenosyl-L-methionine = N(4)-methylcytidine(1402) in 16S rRNA + S-adenosyl-L-homocysteine + H(+). Functionally, specifically methylates the N4 position of cytidine in position 1402 (C1402) of 16S rRNA. The sequence is that of Ribosomal RNA small subunit methyltransferase H from Levilactobacillus brevis (strain ATCC 367 / BCRC 12310 / CIP 105137 / JCM 1170 / LMG 11437 / NCIMB 947 / NCTC 947) (Lactobacillus brevis).